The sequence spans 326 residues: D-amino-acid oxidase (326 aa).

Positions 18, 19, 46, 47, 48, 52, 53, 162, and 179 each coordinate FAD. The D-proline site is built by Tyr-222 and Arg-277. The D-serine site is built by Tyr-222 and Arg-277. FAD contacts are provided by Arg-277, Gly-303, Gly-304, Gly-306, and Thr-308. Residue Gly-304 participates in D-proline binding. D-serine is bound at residue Gly-304.

The protein belongs to the DAMOX/DASOX family. In terms of assembly, monomer. FAD serves as cofactor.

The protein localises to the cytoplasm. It localises to the secreted. The protein resides in the cell wall. The enzyme catalyses a D-alpha-amino acid + O2 + H2O = a 2-oxocarboxylate + H2O2 + NH4(+). The catalysed reaction is D-valine + O2 + H2O = 3-methyl-2-oxobutanoate + H2O2 + NH4(+). It carries out the reaction D-leucine + O2 + H2O = 4-methyl-2-oxopentanoate + H2O2 + NH4(+). It catalyses the reaction D-isoleucine + O2 + H2O = (R)-3-methyl-2-oxopentanoate + H2O2 + NH4(+). The enzyme catalyses D-tyrosine + O2 + H2O = 3-(4-hydroxyphenyl)pyruvate + H2O2 + NH4(+). The catalysed reaction is D-threonine + O2 + H2O = (S)-3-hydroxy-2-oxobutanoate + H2O2 + NH4(+). Inhibited by benzoate and phenylmethylsulfonyl fluoride (PMSF). Weakly inhibited by anthranilate, crotonate, and the amino acid-modifying agents dithionitrobenzoic acid and diethyl pyrocarbonate. Not inhibited by malonate, meso-tartrate, D-malate, or the amino acid-modifying agents iodoacetic acid or butane-2,3-dione. In terms of biological role, catalyzes the oxidative deamination of D-amino acids with broad substrate specificity. This Rubrobacter xylanophilus (strain DSM 9941 / JCM 11954 / NBRC 16129 / PRD-1) protein is D-amino-acid oxidase.